Here is a 243-residue protein sequence, read N- to C-terminus: Probable transcriptional regulatory protein BP2308 (243 aa).

Positions 1 to 21 (MAGHSKWANIQHRKGRQDAKR) are disordered.

It belongs to the TACO1 family.

The protein localises to the cytoplasm. The polypeptide is Probable transcriptional regulatory protein BP2308 (Bordetella pertussis (strain Tohama I / ATCC BAA-589 / NCTC 13251)).